The primary structure comprises 197 residues: Large ribosomal subunit protein bL17 (197 aa).

The interval 120–197 is disordered; it reads DVPPADTGQG…EEEESEEDNT (78 aa). Positions 127-136 are enriched in gly residues; it reads GQGGSGGTRR. Positions 159-197 are enriched in acidic residues; sequence SSDEESESVEEDEATAEEASADAEQGEAEEEEESEEDNT.

This sequence belongs to the bacterial ribosomal protein bL17 family. Part of the 50S ribosomal subunit. Contacts protein L32.

This Salinibacter ruber (strain DSM 13855 / M31) protein is Large ribosomal subunit protein bL17.